The chain runs to 252 residues: 3-dehydroquinate dehydratase (252 aa).

3-dehydroquinate is bound by residues Ser-21, 46-48 (EWR), and Arg-82. His-143 acts as the Proton donor/acceptor in catalysis. Lys-170 serves as the catalytic Schiff-base intermediate with substrate. 3-dehydroquinate contacts are provided by Arg-213, Ser-232, and Gln-236.

It belongs to the type-I 3-dehydroquinase family. In terms of assembly, homodimer.

It carries out the reaction 3-dehydroquinate = 3-dehydroshikimate + H2O. It participates in metabolic intermediate biosynthesis; chorismate biosynthesis; chorismate from D-erythrose 4-phosphate and phosphoenolpyruvate: step 3/7. Involved in the third step of the chorismate pathway, which leads to the biosynthesis of aromatic amino acids. Catalyzes the cis-dehydration of 3-dehydroquinate (DHQ) and introduces the first double bond of the aromatic ring to yield 3-dehydroshikimate. The protein is 3-dehydroquinate dehydratase of Salmonella choleraesuis (strain SC-B67).